A 344-amino-acid chain; its full sequence is Interferon gamma receptor 1-like (344 aa).

The N-terminal stretch at 1 to 22 (MSKHAVVQFGVVYALLFPGVFG) is a signal peptide. Residues 23 to 229 (FVPSPTNVSV…QPTPETDKTG (207 aa)) lie on the Extracellular side of the membrane. The Fibronectin type-III domain occupies 24 to 102 (VPSPTNVSVV…TAHDGQEKSE (79 aa)). Residues asparagine 29, asparagine 44, asparagine 132, and asparagine 189 are each glycosylated (N-linked (GlcNAc...) asparagine). A helical membrane pass occupies residues 230–250 (IIAALIGGATVVLFIIMGFVW). The Cytoplasmic portion of the chain corresponds to 251–344 (LLWRKWSNIP…SSDYDRPKFL (94 aa)). Positions 300–344 (TEEDQSVSARDDTGADPPVVSEEGMAGEDSQGLGCSSDYDRPKFL) are disordered.

Belongs to the type II cytokine receptor family. Highly expressed in brain. Also detected in spleen, heart, intestine, gill and kidney. In immune cell populations, detected at low levels in monocytes, peripheral blood leukocytes, splenocytes, neutrophils and mature macrophages.

It is found in the cell membrane. Receptor which shows binding specificity for the cytokine ifng1 (interferon gamma 1). The polypeptide is Interferon gamma receptor 1-like (Carassius auratus (Goldfish)).